The sequence spans 254 residues: Type III pantothenate kinase (254 aa).

ATP is bound at residue 6–13 (DVGNTNTT). Substrate-binding positions include Y100 and 107–110 (GADR). Residue D109 is the Proton acceptor of the active site. D129 is a K(+) binding site. T132 lines the ATP pocket. T184 contacts substrate.

This sequence belongs to the type III pantothenate kinase family. As to quaternary structure, homodimer. NH4(+) is required as a cofactor. The cofactor is K(+).

It localises to the cytoplasm. The enzyme catalyses (R)-pantothenate + ATP = (R)-4'-phosphopantothenate + ADP + H(+). The protein operates within cofactor biosynthesis; coenzyme A biosynthesis; CoA from (R)-pantothenate: step 1/5. Catalyzes the phosphorylation of pantothenate (Pan), the first step in CoA biosynthesis. The polypeptide is Type III pantothenate kinase (Anaeromyxobacter dehalogenans (strain 2CP-1 / ATCC BAA-258)).